The chain runs to 127 residues: Small ribosomal subunit protein bS6 (127 aa).

A disordered region spans residues 99–127; the sequence is PLPAPRVVPGSEPAAAPQEQPAANSEAAS. Residues 109–127 show a composition bias toward low complexity; the sequence is SEPAAAPQEQPAANSEAAS.

It belongs to the bacterial ribosomal protein bS6 family.

In terms of biological role, binds together with bS18 to 16S ribosomal RNA. This is Small ribosomal subunit protein bS6 from Parasynechococcus marenigrum (strain WH8102).